The sequence spans 151 residues: MFRGANAISLDAKGRLAMPSRYRDELISRSSGQLIITIDAVDPCLCVYPLDEWELIETKLRALPSLREENRRLQRLLIGNAVDLELDGSGRFLVPPRLREYAKLDKRAMLVGQLNKFQLWDEDAWDAVSAADLAAIQQPGAMPDELRDLIL.

2 consecutive SpoVT-AbrB domains span residues 5–52 and 81–124; these read ANAI…PLDE and AVDL…DEDA.

It belongs to the MraZ family. As to quaternary structure, forms oligomers.

The protein resides in the cytoplasm. It localises to the nucleoid. The chain is Transcriptional regulator MraZ from Pseudomonas fluorescens (strain SBW25).